Reading from the N-terminus, the 348-residue chain is D-erythrose-4-phosphate dehydrogenase (348 aa).

Residues 12–13 (RI) and Arg-81 each bind NAD(+). Residues 154–156 (SCT), Arg-200, 213–214 (TK), and Arg-236 each bind substrate. The active-site Nucleophile is the Cys-155. Residue Asn-318 coordinates NAD(+).

It belongs to the glyceraldehyde-3-phosphate dehydrogenase family. Epd subfamily. As to quaternary structure, homotetramer.

The protein localises to the cytoplasm. It catalyses the reaction D-erythrose 4-phosphate + NAD(+) + H2O = 4-phospho-D-erythronate + NADH + 2 H(+). The protein operates within cofactor biosynthesis; pyridoxine 5'-phosphate biosynthesis; pyridoxine 5'-phosphate from D-erythrose 4-phosphate: step 1/5. In terms of biological role, catalyzes the NAD-dependent conversion of D-erythrose 4-phosphate to 4-phosphoerythronate. The sequence is that of D-erythrose-4-phosphate dehydrogenase from Salmonella agona (strain SL483).